A 478-amino-acid polypeptide reads, in one-letter code: PRAME family member 15 (478 aa).

An LRR 1; degenerate repeat occupies 99–126 (RWKLQVLDLQDVCENFWMVWSEAMAHGC). One copy of the LRR 2; degenerate repeat lies at 181–205 (HLCCKKLKILGMPFRNIRSILKMVN). The stretch at 206–232 (LDCIQEVEVNCKWVLPILTQFTPYLGH) is one LRR 3; degenerate repeat. One copy of the LRR 4; degenerate repeat lies at 233 to 268 (MRNLQKLVLSHMDVSRYVSPEQKKEIVTQFTTQFLK). LRR repeat units follow at residues 269-294 (LRCL…LSCL), 295-326 (KTSL…SQLK), 327-347 (TLDL…QILL), 351-378 (AATL…ALSR), and 379-403 (CFEL…LLSH).

It belongs to the PRAME family.

The polypeptide is PRAME family member 15 (Homo sapiens (Human)).